The sequence spans 401 residues: MNEVVIPSVLQDVPVRTSEPRKQNLLDLDREGLERFFADTLGEARYRAHQVMKWIHHRYVTDFDHMTDLGKALRAKLHQHAEVLVPNVVFDKPSTDGTHKWLLAMGTDGKNAIETVYIPDKGRGTLCVSSQVGCGLNCSFCSTATQGFNRNLTTAEIIGQVWVAARHLGNVPHQQRRLTNVVMMGMGEPLMNFDNVVRAMSVMRDDLGYGLASKRVTLSTSGLVPMIDRLSTESDVSLAVSLHAANDALRETLVPLNKKYPIAELMESCARYLRGSKKRDSVTFEYTLMKGINDQPEHARQLARLMRQFDNAVQSKDAGKVNLIPFNPFPGTRYERSGETEIRAFQKILLDAQVLTIVRRTRGDDIDAACGQLKGQVMDRTRRQAEFRRTLEGQADRDAAA.

Residue Glu114 is the Proton acceptor of the active site. The Radical SAM core domain maps to 120-365 (DKGRGTLCVS…TIVRRTRGDD (246 aa)). A disulfide bond links Cys127 and Cys370. Residues Cys134, Cys138, and Cys141 each contribute to the [4Fe-4S] cluster site. S-adenosyl-L-methionine contacts are provided by residues 187–188 (GE), Ser219, 241–243 (SLH), and Asn327. The active-site S-methylcysteine intermediate is the Cys370.

Belongs to the radical SAM superfamily. RlmN family. [4Fe-4S] cluster serves as cofactor.

The protein localises to the cytoplasm. It catalyses the reaction adenosine(2503) in 23S rRNA + 2 reduced [2Fe-2S]-[ferredoxin] + 2 S-adenosyl-L-methionine = 2-methyladenosine(2503) in 23S rRNA + 5'-deoxyadenosine + L-methionine + 2 oxidized [2Fe-2S]-[ferredoxin] + S-adenosyl-L-homocysteine. The enzyme catalyses adenosine(37) in tRNA + 2 reduced [2Fe-2S]-[ferredoxin] + 2 S-adenosyl-L-methionine = 2-methyladenosine(37) in tRNA + 5'-deoxyadenosine + L-methionine + 2 oxidized [2Fe-2S]-[ferredoxin] + S-adenosyl-L-homocysteine. In terms of biological role, specifically methylates position 2 of adenine 2503 in 23S rRNA and position 2 of adenine 37 in tRNAs. m2A2503 modification seems to play a crucial role in the proofreading step occurring at the peptidyl transferase center and thus would serve to optimize ribosomal fidelity. This is Dual-specificity RNA methyltransferase RlmN from Xanthomonas oryzae pv. oryzae (strain MAFF 311018).